The primary structure comprises 302 residues: Myeloid-associated differentiation marker-like protein 2 (302 aa).

MARVEL domains are found at residues 13–149 and 154–298; these read AIWS…AKPG and YMAT…RLRI. Transmembrane regions (helical) follow at residues 45 to 65, 87 to 107, 124 to 144, 158 to 178, 191 to 211, 225 to 245, and 273 to 293; these read AYGT…ILIV, AYAM…PMYF, LAVS…VFLT, ASGL…GALA, WCVA…ILNI, FVVI…VIWP, and LAVT…LIYT.

This sequence belongs to the MAL family.

It localises to the membrane. In Xenopus laevis (African clawed frog), this protein is Myeloid-associated differentiation marker-like protein 2 (myadml2).